Reading from the N-terminus, the 104-residue chain is L-rhamnose mutarotase (104 aa).

Tyr-18 is a substrate binding site. His-22 (proton donor) is an active-site residue. Residues Tyr-41 and 76–77 (WW) each bind substrate. The segment at 85 to 104 (PSNPDNSPISDALDPVFYLD) is disordered.

It belongs to the rhamnose mutarotase family. In terms of assembly, homodimer.

The protein localises to the cytoplasm. The enzyme catalyses alpha-L-rhamnose = beta-L-rhamnose. It functions in the pathway carbohydrate metabolism; L-rhamnose metabolism. Functionally, involved in the anomeric conversion of L-rhamnose. This is L-rhamnose mutarotase from Pectobacterium atrosepticum (strain SCRI 1043 / ATCC BAA-672) (Erwinia carotovora subsp. atroseptica).